The following is a 421-amino-acid chain: UDP-N-acetylglucosamine 1-carboxyvinyltransferase (421 aa).

22–23 (KN) serves as a coordination point for phosphoenolpyruvate. Residue Arg93 participates in UDP-N-acetyl-alpha-D-glucosamine binding. Cys117 acts as the Proton donor in catalysis. Cys117 is subject to 2-(S-cysteinyl)pyruvic acid O-phosphothioketal. Residues 122–126 (RPVDL), Asp308, and Ile330 contribute to the UDP-N-acetyl-alpha-D-glucosamine site.

The protein belongs to the EPSP synthase family. MurA subfamily.

Its subcellular location is the cytoplasm. It carries out the reaction phosphoenolpyruvate + UDP-N-acetyl-alpha-D-glucosamine = UDP-N-acetyl-3-O-(1-carboxyvinyl)-alpha-D-glucosamine + phosphate. It participates in cell wall biogenesis; peptidoglycan biosynthesis. In terms of biological role, cell wall formation. Adds enolpyruvyl to UDP-N-acetylglucosamine. The protein is UDP-N-acetylglucosamine 1-carboxyvinyltransferase of Pseudomonas syringae pv. tomato (strain ATCC BAA-871 / DC3000).